A 72-amino-acid chain; its full sequence is Translation initiation factor IF-1 (72 aa).

The S1-like domain occupies 1-72; that stretch reads MSKQSSIEQD…TKGRIVFRYK (72 aa).

It belongs to the IF-1 family. Component of the 30S ribosomal translation pre-initiation complex which assembles on the 30S ribosome in the order IF-2 and IF-3, IF-1 and N-formylmethionyl-tRNA(fMet); mRNA recruitment can occur at any time during PIC assembly.

The protein localises to the cytoplasm. Its function is as follows. One of the essential components for the initiation of protein synthesis. Stabilizes the binding of IF-2 and IF-3 on the 30S subunit to which N-formylmethionyl-tRNA(fMet) subsequently binds. Helps modulate mRNA selection, yielding the 30S pre-initiation complex (PIC). Upon addition of the 50S ribosomal subunit IF-1, IF-2 and IF-3 are released leaving the mature 70S translation initiation complex. This chain is Translation initiation factor IF-1, found in Cytophaga hutchinsonii (strain ATCC 33406 / DSM 1761 / CIP 103989 / NBRC 15051 / NCIMB 9469 / D465).